The following is a 273-amino-acid chain: Phosphatidylglycerol--prolipoprotein diacylglyceryl transferase (273 aa).

7 helical membrane-spanning segments follow: residues 19–39 (VHWY…LASY), 55–75 (LVFY…VLFY), 90–110 (VWTG…AMIL), 125–145 (FIAP…FIGA), 174–194 (PSQI…LWWF), 202–222 (MAVS…VEFF), and 230–250 (GFIL…MLLI). Position 138 (Arg-138) interacts with a 1,2-diacyl-sn-glycero-3-phospho-(1'-sn-glycerol).

Belongs to the Lgt family.

The protein resides in the cell inner membrane. It carries out the reaction L-cysteinyl-[prolipoprotein] + a 1,2-diacyl-sn-glycero-3-phospho-(1'-sn-glycerol) = an S-1,2-diacyl-sn-glyceryl-L-cysteinyl-[prolipoprotein] + sn-glycerol 1-phosphate + H(+). It functions in the pathway protein modification; lipoprotein biosynthesis (diacylglyceryl transfer). In terms of biological role, catalyzes the transfer of the diacylglyceryl group from phosphatidylglycerol to the sulfhydryl group of the N-terminal cysteine of a prolipoprotein, the first step in the formation of mature lipoproteins. This chain is Phosphatidylglycerol--prolipoprotein diacylglyceryl transferase, found in Acinetobacter baylyi (strain ATCC 33305 / BD413 / ADP1).